Here is a 213-residue protein sequence, read N- to C-terminus: uncharacterized protein (213 aa).

Catalysis depends on charge relay system residues Ser-114, Asp-162, and His-194.

This sequence belongs to the AB hydrolase superfamily. AB hydrolase 2 family.

This is an uncharacterized protein from Rickettsia bellii (strain RML369-C).